Reading from the N-terminus, the 386-residue chain is Succinate--CoA ligase [ADP-forming] subunit beta (386 aa).

Residues 9-244 enclose the ATP-grasp domain; that stretch reads KELLRDYGVP…LNEEDEKEIE (236 aa). Residues Lys46, 53-55, Glu99, Cys102, and Glu107 each bind ATP; that span reads GRG. Residues Asn199 and Asp213 each coordinate Mg(2+). Substrate contacts are provided by residues Asn264 and 321–323; that span reads GIM.

Belongs to the succinate/malate CoA ligase beta subunit family. As to quaternary structure, heterotetramer of two alpha and two beta subunits. The cofactor is Mg(2+).

It carries out the reaction succinate + ATP + CoA = succinyl-CoA + ADP + phosphate. It catalyses the reaction GTP + succinate + CoA = succinyl-CoA + GDP + phosphate. It functions in the pathway carbohydrate metabolism; tricarboxylic acid cycle; succinate from succinyl-CoA (ligase route): step 1/1. Functionally, succinyl-CoA synthetase functions in the citric acid cycle (TCA), coupling the hydrolysis of succinyl-CoA to the synthesis of either ATP or GTP and thus represents the only step of substrate-level phosphorylation in the TCA. The beta subunit provides nucleotide specificity of the enzyme and binds the substrate succinate, while the binding sites for coenzyme A and phosphate are found in the alpha subunit. The chain is Succinate--CoA ligase [ADP-forming] subunit beta from Alkaliphilus oremlandii (strain OhILAs) (Clostridium oremlandii (strain OhILAs)).